We begin with the raw amino-acid sequence, 739 residues long: Phosphoribosylformylglycinamidine synthase subunit PurL (739 aa).

Residue H54 is part of the active site. Positions 57 and 96 each coordinate ATP. E98 contributes to the Mg(2+) binding site. Substrate is bound by residues 99-102 and R121; that span reads SHNH. The active-site Proton acceptor is H100. Position 122 (D122) interacts with Mg(2+). Residue Q245 participates in substrate binding. D273 lines the Mg(2+) pocket. 317–319 is a substrate binding site; sequence ESQ. Residues D500 and G537 each contribute to the ATP site. N538 is a Mg(2+) binding site. Substrate is bound at residue S540.

It belongs to the FGAMS family. As to quaternary structure, monomer. Part of the FGAM synthase complex composed of 1 PurL, 1 PurQ and 2 PurS subunits.

It is found in the cytoplasm. It carries out the reaction N(2)-formyl-N(1)-(5-phospho-beta-D-ribosyl)glycinamide + L-glutamine + ATP + H2O = 2-formamido-N(1)-(5-O-phospho-beta-D-ribosyl)acetamidine + L-glutamate + ADP + phosphate + H(+). It functions in the pathway purine metabolism; IMP biosynthesis via de novo pathway; 5-amino-1-(5-phospho-D-ribosyl)imidazole from N(2)-formyl-N(1)-(5-phospho-D-ribosyl)glycinamide: step 1/2. In terms of biological role, part of the phosphoribosylformylglycinamidine synthase complex involved in the purines biosynthetic pathway. Catalyzes the ATP-dependent conversion of formylglycinamide ribonucleotide (FGAR) and glutamine to yield formylglycinamidine ribonucleotide (FGAM) and glutamate. The FGAM synthase complex is composed of three subunits. PurQ produces an ammonia molecule by converting glutamine to glutamate. PurL transfers the ammonia molecule to FGAR to form FGAM in an ATP-dependent manner. PurS interacts with PurQ and PurL and is thought to assist in the transfer of the ammonia molecule from PurQ to PurL. In Bacillus cereus (strain ATCC 14579 / DSM 31 / CCUG 7414 / JCM 2152 / NBRC 15305 / NCIMB 9373 / NCTC 2599 / NRRL B-3711), this protein is Phosphoribosylformylglycinamidine synthase subunit PurL.